The chain runs to 392 residues: MAFLKLTEQNVQGKTVLIRADMNVPFKDGKISDDTRIRASIASVKYCVDNGASVIVMTHLGRPTEGEFHPEDDVAPVAAHLGSLLGKDVKVLNDWRENKPALNAGDVVMLQNVRINKGEKKNDLELGKAYASLCDVFVNDAFGTAHRAQASTEAVAQAAPVACAGVLMAGELDALGKALKQPARPMVAIVAGSKVSTKLTILESLADKVDQLIVGGGIANTFLLAEGKAIGKSLAEHDLVEESKKIMAKMAAKGGSVPLPTDVVVAKAFAADAEAVVKDIADVAEDDMILDIGPKSAAALADLLKAADTVVWNGPVGVFEFDQFAGGTKALAEAIAQSKAFSIAGGGDTLAAIAKFGVTEQIGYISTGGGAFLEFLEGKELPAVAALEKRGA.

Substrate is bound by residues 21–23 (DMN), Arg36, 59–62 (HLGR), Arg114, and Arg147. Residues Lys198, Glu320, and 346 to 349 (GGDT) each bind ATP.

This sequence belongs to the phosphoglycerate kinase family. In terms of assembly, monomer.

The protein localises to the cytoplasm. The catalysed reaction is (2R)-3-phosphoglycerate + ATP = (2R)-3-phospho-glyceroyl phosphate + ADP. It functions in the pathway carbohydrate degradation; glycolysis; pyruvate from D-glyceraldehyde 3-phosphate: step 2/5. The polypeptide is Phosphoglycerate kinase (Neisseria meningitidis serogroup A / serotype 4A (strain DSM 15465 / Z2491)).